The following is an 88-amino-acid chain: Apolipoprotein C-I (88 aa).

The N-terminal stretch at 1-26 is a signal peptide; it reads MRLFLSLPVLVVVLAMVWEGPAPTQA.

This sequence belongs to the apolipoprotein C1 family.

It localises to the secreted. In terms of biological role, inhibitor of lipoprotein binding to the low density lipoprotein (LDL) receptor, LDL receptor-related protein, and very low density lipoprotein (VLDL) receptor. Associates with high density lipoproteins (HDL) and the triacylglycerol-rich lipoproteins in the plasma and makes up about 10% of the protein of the VLDL and 2% of that of HDL. Appears to interfere directly with fatty acid uptake and is also the major plasma inhibitor of cholesteryl ester transfer protein (CETP). Binds free fatty acids and reduces their intracellular esterification. Modulates the interaction of APOE with beta-migrating VLDL and inhibits binding of beta-VLDL to the LDL receptor-related protein. The polypeptide is Apolipoprotein C-I (APOC1) (Neomonachus schauinslandi (Hawaiian monk seal)).